The following is a 340-amino-acid chain: Guanine nucleotide-binding protein G(I)/G(S)/G(T) subunit beta-3 (340 aa).

WD repeat units follow at residues 53–83, 95–125, 141–170, 182–212, 224–254, 268–298, and 310–340; these read GHLAKIYAMHWATDSKLLVSASQDGKLIVWD, LRSSWVMTCAYAPSGNFVACGGLDNMCSIYN, AHTGYLSCCRFLDDNNIVTSSGDTTCALWD, GHTGDCMSLAVSPDFNLFISGACDASAKLWD, GHESDINAICFFPNGEAICTGSDDASCRLFD, SIICGITSVAFSLSGRLLFAGYDDFNCNVWD, and GHDNRVSCLGVTADGMAVATGSWDSFLKIWN.

This sequence belongs to the WD repeat G protein beta family. G proteins are composed of 3 units, alpha, beta and gamma. Interacts with RASD2.

Guanine nucleotide-binding proteins (G proteins) are involved as a modulator or transducer in various transmembrane signaling systems. The beta and gamma chains are required for the GTPase activity, for replacement of GDP by GTP, and for G protein-effector interaction. In Homo sapiens (Human), this protein is Guanine nucleotide-binding protein G(I)/G(S)/G(T) subunit beta-3 (GNB3).